A 432-amino-acid chain; its full sequence is 3-phosphoshikimate 1-carboxyvinyltransferase (432 aa).

The 3-phosphoshikimate site is built by Lys-23, Ser-24, and Arg-28. Lys-23 contributes to the phosphoenolpyruvate binding site. Residues Gly-95 and Arg-123 each contribute to the phosphoenolpyruvate site. 3-phosphoshikimate is bound by residues Ser-167, Gln-169, Asp-317, and Lys-344. Gln-169 lines the phosphoenolpyruvate pocket. The active-site Proton acceptor is Asp-317. Phosphoenolpyruvate contacts are provided by Arg-348 and Arg-390.

Belongs to the EPSP synthase family. Monomer.

Its subcellular location is the cytoplasm. It carries out the reaction 3-phosphoshikimate + phosphoenolpyruvate = 5-O-(1-carboxyvinyl)-3-phosphoshikimate + phosphate. Its pathway is metabolic intermediate biosynthesis; chorismate biosynthesis; chorismate from D-erythrose 4-phosphate and phosphoenolpyruvate: step 6/7. Catalyzes the transfer of the enolpyruvyl moiety of phosphoenolpyruvate (PEP) to the 5-hydroxyl of shikimate-3-phosphate (S3P) to produce enolpyruvyl shikimate-3-phosphate and inorganic phosphate. This is 3-phosphoshikimate 1-carboxyvinyltransferase from Staphylococcus aureus (strain Newman).